A 379-amino-acid polypeptide reads, in one-letter code: Succinate--CoA ligase [ADP-forming] subunit beta (379 aa).

One can recognise an ATP-grasp domain in the interval 9 to 235; that stretch reads KEIAKNNGIP…GRELSEMEAI (227 aa). Residues Lys-45, Glu-91, Ile-94, and Glu-99 each coordinate ATP. Residues Asn-191 and Asp-205 each contribute to the Mg(2+) site. Substrate-binding positions include Asn-255 and 312-314; that span reads GIT.

Belongs to the succinate/malate CoA ligase beta subunit family. In terms of assembly, heterotetramer of two alpha and two beta subunits. The cofactor is Mg(2+).

The catalysed reaction is succinate + ATP + CoA = succinyl-CoA + ADP + phosphate. It catalyses the reaction GTP + succinate + CoA = succinyl-CoA + GDP + phosphate. The protein operates within carbohydrate metabolism; tricarboxylic acid cycle; succinate from succinyl-CoA (ligase route): step 1/1. In terms of biological role, succinyl-CoA synthetase functions in the citric acid cycle (TCA), coupling the hydrolysis of succinyl-CoA to the synthesis of either ATP or GTP and thus represents the only step of substrate-level phosphorylation in the TCA. The beta subunit provides nucleotide specificity of the enzyme and binds the substrate succinate, while the binding sites for coenzyme A and phosphate are found in the alpha subunit. This Staphylothermus marinus (strain ATCC 43588 / DSM 3639 / JCM 9404 / F1) protein is Succinate--CoA ligase [ADP-forming] subunit beta.